Consider the following 665-residue polypeptide: tRNA 5-methylaminomethyl-2-thiouridine biosynthesis bifunctional protein MnmC (665 aa).

Residues Met1–Val243 are tRNA (mnm(5)s(2)U34)-methyltransferase. The tract at residues Ile268–Asn665 is FAD-dependent cmnm(5)s(2)U34 oxidoreductase.

In the N-terminal section; belongs to the methyltransferase superfamily. tRNA (mnm(5)s(2)U34)-methyltransferase family. The protein in the C-terminal section; belongs to the DAO family. FAD is required as a cofactor.

It localises to the cytoplasm. The catalysed reaction is 5-aminomethyl-2-thiouridine(34) in tRNA + S-adenosyl-L-methionine = 5-methylaminomethyl-2-thiouridine(34) in tRNA + S-adenosyl-L-homocysteine + H(+). In terms of biological role, catalyzes the last two steps in the biosynthesis of 5-methylaminomethyl-2-thiouridine (mnm(5)s(2)U) at the wobble position (U34) in tRNA. Catalyzes the FAD-dependent demodification of cmnm(5)s(2)U34 to nm(5)s(2)U34, followed by the transfer of a methyl group from S-adenosyl-L-methionine to nm(5)s(2)U34, to form mnm(5)s(2)U34. This Aeromonas salmonicida (strain A449) protein is tRNA 5-methylaminomethyl-2-thiouridine biosynthesis bifunctional protein MnmC.